The primary structure comprises 478 residues: Probable sodium/glutamine symporter GlnT (478 aa).

Helical transmembrane passes span 14–34, 85–105, 145–165, 185–205, 211–231, 236–256, 298–318, 342–362, 381–401, and 411–431; these read DLLW…YFTF, IAIA…IIAI, WMGA…FNSV, LGLI…KRIA, IVVV…FSNI, GVLA…GGAL, AFGV…IILF, GSWA…CALI, LIFV…VAKV, and FMGL…KVVF.

This sequence belongs to the alanine or glycine:cation symporter (AGCS) (TC 2.A.25) family.

The protein resides in the cell membrane. Functionally, probably functions as a sodium/glutamine symporter for glutamine uptake. The chain is Probable sodium/glutamine symporter GlnT (glnT) from Bacillus subtilis (strain 168).